The following is a 204-amino-acid chain: Holliday junction branch migration complex subunit RuvA (204 aa).

The interval 1–64 is domain I; sequence MISRMKGIIL…EDAQLLYGFH (64 aa). A domain II region spans residues 65–143; the sequence is HPKERAMFSE…NLNKNLFKST (79 aa). The flexible linker stretch occupies residues 144–155; the sequence is ADHMLSSVSTDL. The tract at residues 156-204 is domain III; the sequence is SAKSAEAEAISALISLGYKPQEAAQLIKNIAQPDLDSQALIKHALRSTL.

This sequence belongs to the RuvA family. In terms of assembly, homotetramer. Forms an RuvA(8)-RuvB(12)-Holliday junction (HJ) complex. HJ DNA is sandwiched between 2 RuvA tetramers; dsDNA enters through RuvA and exits via RuvB. An RuvB hexamer assembles on each DNA strand where it exits the tetramer. Each RuvB hexamer is contacted by two RuvA subunits (via domain III) on 2 adjacent RuvB subunits; this complex drives branch migration. In the full resolvosome a probable DNA-RuvA(4)-RuvB(12)-RuvC(2) complex forms which resolves the HJ.

Its subcellular location is the cytoplasm. Functionally, the RuvA-RuvB-RuvC complex processes Holliday junction (HJ) DNA during genetic recombination and DNA repair, while the RuvA-RuvB complex plays an important role in the rescue of blocked DNA replication forks via replication fork reversal (RFR). RuvA specifically binds to HJ cruciform DNA, conferring on it an open structure. The RuvB hexamer acts as an ATP-dependent pump, pulling dsDNA into and through the RuvAB complex. HJ branch migration allows RuvC to scan DNA until it finds its consensus sequence, where it cleaves and resolves the cruciform DNA. This Hamiltonella defensa subsp. Acyrthosiphon pisum (strain 5AT) protein is Holliday junction branch migration complex subunit RuvA.